The primary structure comprises 318 residues: Cyclic AMP receptor-like protein F (318 aa).

The Extracellular portion of the chain corresponds to 1 to 3 (MKD). Residues 4 to 24 (IILIYMICAPISMIGSLFIII) form a helical membrane-spanning segment. The Cytoplasmic portion of the chain corresponds to 25–38 (TWLLYAKLKNSGSN). The helical transmembrane segment at 39-59 (FIFFQAISDFFFTSKYIITII) threads the bilayer. Over 60–83 (FYYINIPQFSDETSSTDTNPYCFS) the chain is Extracellular. A disulfide bridge links C81 with C177. A helical transmembrane segment spans residues 84 to 104 (LGLFSQFFGQATIMWSYTMTV). Topologically, residues 105-145 (KVFHSYFEMKKKNNNNNIGSNNIGGGGGGNNSNKQNSIDKT) are cytoplasmic. A helical transmembrane segment spans residues 146 to 166 (LKWYHLFVWGFCLVNATIIGI). Residues 167–187 (SKQYGPSSTGCWIVGANNPYR) lie on the Extracellular side of the membrane. The chain crosses the membrane as a helical span at residues 188-208 (FFELVPLYFTITTSIIILILI). At 209 to 234 (LVKMKKSKPSSLLPTESMRYNQQARE) the chain is on the cytoplasmic side. The chain crosses the membrane as a helical span at residues 235–255 (FKIQLMKFVLIFIIFWLPATV). Residues 256–267 (LRTLEYFGIEKT) lie on the Extracellular side of the membrane. A helical transmembrane segment spans residues 268 to 288 (FFILLDAVSVSLQALANSLVW). The Cytoplasmic segment spans residues 289–318 (ATSPQFLKLMKRKVVNKPNKQMEREYLINK).

The protein belongs to the G-protein coupled receptor 5 family.

It is found in the membrane. Functionally, receptor for cAMP. In Dictyostelium discoideum (Social amoeba), this protein is Cyclic AMP receptor-like protein F (crlF).